A 218-amino-acid polypeptide reads, in one-letter code: Octanoyltransferase (218 aa).

In terms of domain architecture, BPL/LPL catalytic spans Arg31–Glu206. Residues Arg70–His77, Ser137–Gly139, and Gly150–Ala152 contribute to the substrate site. Residue Cys168 is the Acyl-thioester intermediate of the active site.

This sequence belongs to the LipB family.

It localises to the cytoplasm. The catalysed reaction is octanoyl-[ACP] + L-lysyl-[protein] = N(6)-octanoyl-L-lysyl-[protein] + holo-[ACP] + H(+). Its pathway is protein modification; protein lipoylation via endogenous pathway; protein N(6)-(lipoyl)lysine from octanoyl-[acyl-carrier-protein]: step 1/2. In terms of biological role, catalyzes the transfer of endogenously produced octanoic acid from octanoyl-acyl-carrier-protein onto the lipoyl domains of lipoate-dependent enzymes. Lipoyl-ACP can also act as a substrate although octanoyl-ACP is likely to be the physiological substrate. This chain is Octanoyltransferase, found in Pseudomonas syringae pv. tomato (strain ATCC BAA-871 / DC3000).